The primary structure comprises 513 residues: Noroxomaritidine synthase 2 (513 aa).

The chain crosses the membrane as a helical span at residues 14 to 34; the sequence is HYPEILIAIACFLIFSLLLSA. Residue Cys-458 participates in heme binding.

It belongs to the cytochrome P450 family. Heme serves as cofactor. Mostly expressed in stems, and, to a lower extent, in bulbs, roots, leaves and flowers.

It localises to the membrane. It catalyses the reaction 4'-O-methylnorbelladine + reduced [NADPH--hemoprotein reductase] + O2 = (10bR,4aS)-noroxomaritidine + oxidized [NADPH--hemoprotein reductase] + 2 H2O + H(+). The catalysed reaction is 4'-O-methylnorbelladine + reduced [NADPH--hemoprotein reductase] + O2 = (10bS,4aR)-noroxomaritidine + oxidized [NADPH--hemoprotein reductase] + 2 H2O + H(+). It participates in alkaloid biosynthesis. Functionally, cytochrome P450 that catalyzes an intramolecular para-para' C-C phenol coupling of 4'-O-methylnorbelladine in alkaloids biosynthesis, including haemanthamine- and crinamine-type alkaloids, promising anticancer agents. Catalyzes the formation of (10bR,4aS)-noroxomaritidine and (10bS,4aR)-noroxomaritidine from 4'-O-methylnorbelladine. The chain is Noroxomaritidine synthase 2 from Narcissus pseudonarcissus (Daffodil).